The sequence spans 399 residues: CCA-adding enzyme (399 aa).

The ATP site is built by Gly-33 and Arg-36. CTP-binding residues include Gly-33 and Arg-36. Positions 46 and 48 each coordinate Mg(2+). ATP contacts are provided by Arg-117, Asp-160, Arg-163, Arg-166, and Arg-169. CTP contacts are provided by Arg-117, Asp-160, Arg-163, Arg-166, and Arg-169.

It belongs to the tRNA nucleotidyltransferase/poly(A) polymerase family. Bacterial CCA-adding enzyme type 3 subfamily. As to quaternary structure, homodimer. The cofactor is Mg(2+).

The enzyme catalyses a tRNA precursor + 2 CTP + ATP = a tRNA with a 3' CCA end + 3 diphosphate. It catalyses the reaction a tRNA with a 3' CCA end + 2 CTP + ATP = a tRNA with a 3' CCACCA end + 3 diphosphate. Functionally, catalyzes the addition and repair of the essential 3'-terminal CCA sequence in tRNAs without using a nucleic acid template. Adds these three nucleotides in the order of C, C, and A to the tRNA nucleotide-73, using CTP and ATP as substrates and producing inorganic pyrophosphate. tRNA 3'-terminal CCA addition is required both for tRNA processing and repair. Also involved in tRNA surveillance by mediating tandem CCA addition to generate a CCACCA at the 3' terminus of unstable tRNAs. While stable tRNAs receive only 3'-terminal CCA, unstable tRNAs are marked with CCACCA and rapidly degraded. The sequence is that of CCA-adding enzyme from Lactobacillus helveticus (strain DPC 4571).